We begin with the raw amino-acid sequence, 441 residues long: Tubulin beta chain, nucleomorph (441 aa).

GTP-binding residues include Gln-11, Glu-69, Ser-138, Gly-142, Thr-143, Gly-144, Asn-204, and Asn-226. A Mg(2+)-binding site is contributed by Glu-69.

This sequence belongs to the tubulin family. As to quaternary structure, dimer of alpha and beta chains. A typical microtubule is a hollow water-filled tube with an outer diameter of 25 nm and an inner diameter of 15 nM. Alpha-beta heterodimers associate head-to-tail to form protofilaments running lengthwise along the microtubule wall with the beta-tubulin subunit facing the microtubule plus end conferring a structural polarity. Microtubules usually have 13 protofilaments but different protofilament numbers can be found in some organisms and specialized cells. Mg(2+) is required as a cofactor.

Tubulin is the major constituent of microtubules, a cylinder consisting of laterally associated linear protofilaments composed of alpha- and beta-tubulin heterodimers. Microtubules grow by the addition of GTP-tubulin dimers to the microtubule end, where a stabilizing cap forms. Below the cap, tubulin dimers are in GDP-bound state, owing to GTPase activity of alpha-tubulin. This is Tubulin beta chain, nucleomorph (tubB) from Guillardia theta (Cryptophyte).